We begin with the raw amino-acid sequence, 467 residues long: Tripartite motif-containing protein 75 (467 aa).

An RING-type zinc finger spans residues 16-57 (CPICLDDLTDPVTVECGHNFCRSCIKDFWAGQQATSSCPVCR). The B box-type zinc-finger motif lies at 90–131 (ESSTSCERHNQALTLFCEDDLQLLCDQCVEPESHGRHQVLSI). Residues cysteine 95, histidine 98, cysteine 117, and histidine 123 each coordinate Zn(2+). Residues 168–222 (VTLREQAEAQRSQLTSECEKLMRFLDQEERAAFSRLEDEEMRLEKRLLDNIAALE) are a coiled coil. Residues 276–466 (YSFPLQYSAL…LRLCSATDSE (191 aa)) form the B30.2/SPRY domain.

It belongs to the TRIM/RBCC family.

The protein resides in the cytoplasm. It localises to the cytoskeleton. Its subcellular location is the spindle. May play a role in female meiosis. The sequence is that of Tripartite motif-containing protein 75 from Mus musculus (Mouse).